Consider the following 326-residue polypeptide: Apolipoprotein F (326 aa).

The N-terminal stretch at 1 to 35 is a signal peptide; it reads MTGLCGYSAPDMRGLRLIMIPVELLLCYLLLHPVD. A propeptide spanning residues 36-164 is cleaved from the precursor; that stretch reads ATSYGKQTNV…EQQSTGRVGR (129 aa). A glycan (N-linked (GlcNAc...) asparagine) is linked at Asn-118. O-linked (GalNAc...) threonine glycosylation occurs at Thr-274. Ser-323 carries the post-translational modification Phosphoserine.

It belongs to the apolipoprotein F family. O-glycosylated with core 1 or possibly core 8 glycans. In terms of tissue distribution, expressed by the liver and secreted in plasma.

The protein resides in the secreted. Minor apolipoprotein that associates with LDL. Inhibits cholesteryl ester transfer protein (CETP) activity and appears to be an important regulator of cholesterol transport. Also associates to a lesser degree with VLDL, Apo-AI and Apo-AII. The protein is Apolipoprotein F (APOF) of Homo sapiens (Human).